The primary structure comprises 349 residues: UDP-3-O-acylglucosamine N-acyltransferase (349 aa).

The active-site Proton acceptor is the His-243.

This sequence belongs to the transferase hexapeptide repeat family. LpxD subfamily. In terms of assembly, homotrimer.

The enzyme catalyses a UDP-3-O-[(3R)-3-hydroxyacyl]-alpha-D-glucosamine + a (3R)-hydroxyacyl-[ACP] = a UDP-2-N,3-O-bis[(3R)-3-hydroxyacyl]-alpha-D-glucosamine + holo-[ACP] + H(+). The protein operates within bacterial outer membrane biogenesis; LPS lipid A biosynthesis. Its function is as follows. Catalyzes the N-acylation of UDP-3-O-acylglucosamine using 3-hydroxyacyl-ACP as the acyl donor. Is involved in the biosynthesis of lipid A, a phosphorylated glycolipid that anchors the lipopolysaccharide to the outer membrane of the cell. This is UDP-3-O-acylglucosamine N-acyltransferase from Myxococcus xanthus (strain DK1622).